A 283-amino-acid polypeptide reads, in one-letter code: uncharacterized protein (283 aa).

6 helical membrane-spanning segments follow: residues 28 to 48, 65 to 85, 113 to 133, 135 to 155, 200 to 220, and 246 to 266; these read LSSTSGAIGAIFGIILSILLI, LTSLIVASFGFLIALIIGFIL, LKRGFLYWIGNIILSIIFMIV, ILFIIFGVFLIFLPLVGIVFI, LNYIILLIIVGVIVIVINFVV, and IVDVISAVISAFVGFYTAVFA.

The protein to M.jannaschii MJ0233.

It localises to the cell membrane. This is an uncharacterized protein from Methanocaldococcus jannaschii (strain ATCC 43067 / DSM 2661 / JAL-1 / JCM 10045 / NBRC 100440) (Methanococcus jannaschii).